Reading from the N-terminus, the 263-residue chain is Alpha-tubulin N-acetyltransferase 2 (263 aa).

Residues 1–181 form the N-acetyltransferase domain; it reads MEIAFDLSSI…NKYAVFPNFF (181 aa). Position 115–128 (115–128) interacts with acetyl-CoA; that stretch reads FFIVPTEQRSGNGF. Disordered regions lie at residues 191 to 224 and 236 to 263; these read TPRQ…RPRH and FPRG…EPIW. A compositionally biased stretch (low complexity) spans 200–212; sequence RASSAVSSHTTSR. The segment covering 253 to 263 has biased composition (basic and acidic residues); it reads LTRDQRHEPIW.

This sequence belongs to the acetyltransferase ATAT1 family.

It carries out the reaction L-lysyl-[alpha-tubulin] + acetyl-CoA = N(6)-acetyl-L-lysyl-[alpha-tubulin] + CoA + H(+). Specifically acetylates 'Lys-40' in alpha-tubulin/mec-12 on the lumenal side of microtubules. Promotes microtubule destabilization and accelerates microtubule dynamics; this activity may be independent of acetylation activity. Acetylates alpha-tubulin with a slow enzymatic rate, due to a catalytic site that is not optimized for acetyl transfer. Enters the microtubule through each end and diffuses quickly throughout the lumen of microtubules. Acetylates only long/old microtubules because of its slow acetylation rate since it does not have time to act on dynamically unstable microtubules before the enzyme is released. Required for the maintenance of touch receptor neurons and possibly other type of neurons involved in locomotion. The polypeptide is Alpha-tubulin N-acetyltransferase 2 (atat-2) (Caenorhabditis briggsae).